A 101-amino-acid polypeptide reads, in one-letter code: Ascorbate-specific PTS system EIIB component (101 aa).

In terms of domain architecture, PTS EIIB type-2 spans 3–96 (VRILAVCGNG…KLLEVIKAHF (94 aa)). C9 acts as the Phosphocysteine intermediate in catalysis. Residue C9 is modified to Phosphocysteine.

Its subcellular location is the cytoplasm. It carries out the reaction N(pros)-phospho-L-histidyl-[protein] + L-ascorbate(out) = L-ascorbate 6-phosphate(in) + L-histidyl-[protein]. Its function is as follows. The phosphoenolpyruvate-dependent sugar phosphotransferase system (sugar PTS), a major carbohydrate active transport system, catalyzes the phosphorylation of incoming sugar substrates concomitantly with their translocation across the cell membrane. The enzyme II UlaABC PTS system is involved in ascorbate transport. The chain is Ascorbate-specific PTS system EIIB component (ulaB) from Escherichia coli O6:H1 (strain CFT073 / ATCC 700928 / UPEC).